Reading from the N-terminus, the 119-residue chain is Large ribosomal subunit protein bL20 (119 aa).

It belongs to the bacterial ribosomal protein bL20 family.

In terms of biological role, binds directly to 23S ribosomal RNA and is necessary for the in vitro assembly process of the 50S ribosomal subunit. It is not involved in the protein synthesizing functions of that subunit. This chain is Large ribosomal subunit protein bL20, found in Clostridium novyi (strain NT).